The primary structure comprises 396 residues: NADH-quinone oxidoreductase subunit D (396 aa).

It belongs to the complex I 49 kDa subunit family. As to quaternary structure, NDH-1 is composed of 14 different subunits. Subunits NuoB, C, D, E, F, and G constitute the peripheral sector of the complex.

The protein resides in the cell inner membrane. The catalysed reaction is a quinone + NADH + 5 H(+)(in) = a quinol + NAD(+) + 4 H(+)(out). Its function is as follows. NDH-1 shuttles electrons from NADH, via FMN and iron-sulfur (Fe-S) centers, to quinones in the respiratory chain. The immediate electron acceptor for the enzyme in this species is believed to be ubiquinone. Couples the redox reaction to proton translocation (for every two electrons transferred, four hydrogen ions are translocated across the cytoplasmic membrane), and thus conserves the redox energy in a proton gradient. This is NADH-quinone oxidoreductase subunit D from Methylobacterium radiotolerans (strain ATCC 27329 / DSM 1819 / JCM 2831 / NBRC 15690 / NCIMB 10815 / 0-1).